A 338-amino-acid chain; its full sequence is RNA 3'-terminal phosphate cyclase (338 aa).

ATP is bound by residues Gln103 and Tyr283–Gln287. His308 acts as the Tele-AMP-histidine intermediate in catalysis.

Belongs to the RNA 3'-terminal cyclase family. Type 1 subfamily.

It localises to the cytoplasm. It carries out the reaction a 3'-end 3'-phospho-ribonucleotide-RNA + ATP = a 3'-end 2',3'-cyclophospho-ribonucleotide-RNA + AMP + diphosphate. In terms of biological role, catalyzes the conversion of 3'-phosphate to a 2',3'-cyclic phosphodiester at the end of RNA. The mechanism of action of the enzyme occurs in 3 steps: (A) adenylation of the enzyme by ATP; (B) transfer of adenylate to an RNA-N3'P to produce RNA-N3'PP5'A; (C) and attack of the adjacent 2'-hydroxyl on the 3'-phosphorus in the diester linkage to produce the cyclic end product. The biological role of this enzyme is unknown but it is likely to function in some aspects of cellular RNA processing. The sequence is that of RNA 3'-terminal phosphate cyclase from Escherichia coli O17:K52:H18 (strain UMN026 / ExPEC).